Here is a 406-residue protein sequence, read N- to C-terminus: Peptidase T (406 aa).

His81 contacts Zn(2+). Residue Asp83 is part of the active site. Asp142 is a binding site for Zn(2+). Glu176 serves as the catalytic Proton acceptor. Residues Glu177, Asp199, and His381 each coordinate Zn(2+).

This sequence belongs to the peptidase M20B family. Requires Zn(2+) as cofactor.

The protein localises to the cytoplasm. The enzyme catalyses Release of the N-terminal residue from a tripeptide.. Functionally, cleaves the N-terminal amino acid of tripeptides. The protein is Peptidase T of Streptococcus pneumoniae serotype 2 (strain D39 / NCTC 7466).